The sequence spans 284 residues: Nucleotide-binding protein PP_0949 (284 aa).

Residue 8-15 (GRSGSGKS) participates in ATP binding. 60–63 (DARN) is a binding site for GTP.

The protein belongs to the RapZ-like family.

Displays ATPase and GTPase activities. The sequence is that of Nucleotide-binding protein PP_0949 from Pseudomonas putida (strain ATCC 47054 / DSM 6125 / CFBP 8728 / NCIMB 11950 / KT2440).